We begin with the raw amino-acid sequence, 426 residues long: Serine--tRNA ligase (426 aa).

Residue 230-232 (TAE) participates in L-serine binding. Residue 261 to 263 (RSE) coordinates ATP. Glu-284 lines the L-serine pocket. ATP is bound at residue 348–351 (EISS). Ser-384 contacts L-serine.

It belongs to the class-II aminoacyl-tRNA synthetase family. Type-1 seryl-tRNA synthetase subfamily. As to quaternary structure, homodimer. The tRNA molecule binds across the dimer.

The protein localises to the cytoplasm. The enzyme catalyses tRNA(Ser) + L-serine + ATP = L-seryl-tRNA(Ser) + AMP + diphosphate + H(+). It catalyses the reaction tRNA(Sec) + L-serine + ATP = L-seryl-tRNA(Sec) + AMP + diphosphate + H(+). It participates in aminoacyl-tRNA biosynthesis; selenocysteinyl-tRNA(Sec) biosynthesis; L-seryl-tRNA(Sec) from L-serine and tRNA(Sec): step 1/1. Catalyzes the attachment of serine to tRNA(Ser). Is also able to aminoacylate tRNA(Sec) with serine, to form the misacylated tRNA L-seryl-tRNA(Sec), which will be further converted into selenocysteinyl-tRNA(Sec). This Novosphingobium aromaticivorans (strain ATCC 700278 / DSM 12444 / CCUG 56034 / CIP 105152 / NBRC 16084 / F199) protein is Serine--tRNA ligase.